Here is a 275-residue protein sequence, read N- to C-terminus: NAD kinase (275 aa).

Asp-66 serves as the catalytic Proton acceptor. NAD(+)-binding positions include 66–67, 138–139, His-168, Asp-170, 181–186, and Val-205; these read DG, NE, and TAYNLS.

The protein belongs to the NAD kinase family. It depends on a divalent metal cation as a cofactor.

Its subcellular location is the cytoplasm. The enzyme catalyses NAD(+) + ATP = ADP + NADP(+) + H(+). Its function is as follows. Involved in the regulation of the intracellular balance of NAD and NADP, and is a key enzyme in the biosynthesis of NADP. Catalyzes specifically the phosphorylation on 2'-hydroxyl of the adenosine moiety of NAD to yield NADP. In Halorubrum lacusprofundi (strain ATCC 49239 / DSM 5036 / JCM 8891 / ACAM 34), this protein is NAD kinase.